The following is a 466-amino-acid chain: Peptidoglycan-N-acetylglucosamine deacetylase PgdA (466 aa).

At 1–5 the chain is on the cytoplasmic side; the sequence is MKIRW. Residues 6–26 form a helical membrane-spanning segment; sequence IRLSLVAILIIAVVFIGVIGF. Residues 27–466 are Extracellular-facing; sequence QKYQFSKSRN…FDKTDSRMVK (440 aa). A NodB homology domain is found at 266 to 440; sequence KRIALTFDDG…KLKSQGYEFV (175 aa). D273 acts as the Proton acceptor in catalysis. Zn(2+) contacts are provided by D274, H324, and H328. Position 365 (Y365) interacts with substrate. H415 (proton donor) is an active-site residue.

In terms of assembly, homodimer. Interacts (via transmembrane domain) with PbpA1 (via transmembrane domain); the interaction is important for the peptidoglycan N-deacetylase function of this protein. Zn(2+) is required as a cofactor.

Its subcellular location is the cell membrane. It localises to the secreted. The protein resides in the cell wall. The catalysed reaction is peptidoglycan-N-acetyl-D-glucosamine + H2O = peptidoglycan-D-glucosamine + acetate.. Its function is as follows. Catalyzes the deacetylation of N-acetylglucosamine (GlcNAc) residues in peptidoglycan (PG). Also deacetylates N-acetylated PG. Does not deacetylate N-acetylmuramic acid. Confers host lysozyme resistance. Critical for virulence and escape from innate immune response of the host. Required for intracellular survival of bacteria in macrophages of the host. Required for successful host colonization. Controls the production of inflammatory mediators in the bone marrow derived macrophages (BMMs) of the infected mouse. Suppresses Toll-like receptor 2 (TLR2)-dependent secretion of interleukin 6 (IL-6) and interferon-beta (IFN-beta) in the macrophages of the infected mouse. May decrease accessibility of pattern recognition receptors (PRRs) such as nucleotide-binding oligomerization domain protein (NOD) 1 of the host to the bacterial cell wall components. Protects cells from autolysis induced by lysozyme or by other autolysis-inducing agents. In Listeria monocytogenes serotype 1/2a (strain 10403S), this protein is Peptidoglycan-N-acetylglucosamine deacetylase PgdA.